A 601-amino-acid polypeptide reads, in one-letter code: Elongation factor 4 (601 aa).

A tr-type G domain is found at 8 to 189 (EQIRNFGIIA…LIVRKAPPPK (182 aa)). Position 20 to 25 (20 to 25 (DHGKST)) interacts with GTP.

Belongs to the TRAFAC class translation factor GTPase superfamily. Classic translation factor GTPase family. LepA subfamily.

It is found in the cell membrane. The catalysed reaction is GTP + H2O = GDP + phosphate + H(+). Its function is as follows. Required for accurate and efficient protein synthesis under certain stress conditions. May act as a fidelity factor of the translation reaction, by catalyzing a one-codon backward translocation of tRNAs on improperly translocated ribosomes. Back-translocation proceeds from a post-translocation (POST) complex to a pre-translocation (PRE) complex, thus giving elongation factor G a second chance to translocate the tRNAs correctly. Binds to ribosomes in a GTP-dependent manner. This Tropheryma whipplei (strain TW08/27) (Whipple's bacillus) protein is Elongation factor 4.